The following is a 554-amino-acid chain: CTP synthase (554 aa).

Residues 1-265 (MTPLIFVTGG…DELVIEQFKL (265 aa)) form an amidoligase domain region. Ser13 lines the CTP pocket. Ser13 provides a ligand contact to UTP. ATP-binding positions include 14 to 19 (SLGKGI) and Asp71. The Mg(2+) site is built by Asp71 and Glu139. Residues 146–148 (DIE), 186–191 (KTKPTQ), and Lys222 contribute to the CTP site. UTP contacts are provided by residues 186–191 (KTKPTQ) and Lys222. The Glutamine amidotransferase type-1 domain maps to 292–545 (NIAVVGKYVD…VRAAREKKAG (254 aa)). Residue Gly353 participates in L-glutamine binding. Residue Cys380 is the Nucleophile; for glutamine hydrolysis of the active site. L-glutamine-binding positions include 381–384 (YGMQ), Glu404, and Arg471. Residues His518 and Glu520 contribute to the active site.

Belongs to the CTP synthase family. Homotetramer.

It carries out the reaction UTP + L-glutamine + ATP + H2O = CTP + L-glutamate + ADP + phosphate + 2 H(+). It catalyses the reaction L-glutamine + H2O = L-glutamate + NH4(+). The catalysed reaction is UTP + NH4(+) + ATP = CTP + ADP + phosphate + 2 H(+). It participates in pyrimidine metabolism; CTP biosynthesis via de novo pathway; CTP from UDP: step 2/2. Allosterically activated by GTP, when glutamine is the substrate; GTP has no effect on the reaction when ammonia is the substrate. The allosteric effector GTP functions by stabilizing the protein conformation that binds the tetrahedral intermediate(s) formed during glutamine hydrolysis. Inhibited by the product CTP, via allosteric rather than competitive inhibition. In terms of biological role, catalyzes the ATP-dependent amination of UTP to CTP with either L-glutamine or ammonia as the source of nitrogen. Regulates intracellular CTP levels through interactions with the four ribonucleotide triphosphates. The protein is CTP synthase of Xanthomonas euvesicatoria pv. vesicatoria (strain 85-10) (Xanthomonas campestris pv. vesicatoria).